Reading from the N-terminus, the 320-residue chain is Cytochrome f (320 aa).

The first 35 residues, 1 to 35 (MQTRNAFSWIKKEITRSISVLLMIYIITRAPISNA), serve as a signal peptide directing secretion. Residues Tyr-36, Cys-56, Cys-59, and His-60 each contribute to the heme site. A helical membrane pass occupies residues 286 to 305 (VQGLLLFLASIILAQILLVL).

The protein belongs to the cytochrome f family. The 4 large subunits of the cytochrome b6-f complex are cytochrome b6, subunit IV (17 kDa polypeptide, petD), cytochrome f and the Rieske protein, while the 4 small subunits are PetG, PetL, PetM and PetN. The complex functions as a dimer. Heme is required as a cofactor.

The protein localises to the plastid. Its subcellular location is the chloroplast thylakoid membrane. Functionally, component of the cytochrome b6-f complex, which mediates electron transfer between photosystem II (PSII) and photosystem I (PSI), cyclic electron flow around PSI, and state transitions. This chain is Cytochrome f (petA), found in Pisum sativum (Garden pea).